We begin with the raw amino-acid sequence, 89 residues long: Gibberellin-regulated protein 10 (89 aa).

The signal sequence occupies residues 1-25; that stretch reads MKFPAVKVLIISLLITSSLFILSTA.

Belongs to the GASA family. Post-translationally, six disulfide bonds may be present. Expressed in vasculature of rosette leaves and roots, cotyledon and root tips and developing seeds.

It is found in the secreted. Its function is as follows. Gibberellin-regulated protein that may function in hormonal controlled steps of development such as seed germination, flowering and seed maturation. In Arabidopsis thaliana (Mouse-ear cress), this protein is Gibberellin-regulated protein 10 (GASA10).